We begin with the raw amino-acid sequence, 430 residues long: PCI domain-containing protein 2 homolog (430 aa).

The region spanning 243 to 424 (ITYRFFNGRL…ALVVSPTNPF (182 aa)) is the PCI domain.

This sequence belongs to the CSN12 family.

This Dictyostelium discoideum (Social amoeba) protein is PCI domain-containing protein 2 homolog (pcid2).